The sequence spans 273 residues: Shikimate dehydrogenase (NADP(+)) (273 aa).

Shikimate contacts are provided by residues 19-21 (SQS) and T66. K70 (proton acceptor) is an active-site residue. An NADP(+)-binding site is contributed by E82. Shikimate is bound by residues N91 and D107. NADP(+) contacts are provided by residues 131–135 (GAGGA) and M217. Residue Y219 participates in shikimate binding. An NADP(+)-binding site is contributed by G241.

Belongs to the shikimate dehydrogenase family. As to quaternary structure, homodimer.

The enzyme catalyses shikimate + NADP(+) = 3-dehydroshikimate + NADPH + H(+). It functions in the pathway metabolic intermediate biosynthesis; chorismate biosynthesis; chorismate from D-erythrose 4-phosphate and phosphoenolpyruvate: step 4/7. Involved in the biosynthesis of the chorismate, which leads to the biosynthesis of aromatic amino acids. Catalyzes the reversible NADPH linked reduction of 3-dehydroshikimate (DHSA) to yield shikimate (SA). The polypeptide is Shikimate dehydrogenase (NADP(+)) (Buchnera aphidicola subsp. Schizaphis graminum (strain Sg)).